The primary structure comprises 155 residues: Ribonuclease H (155 aa).

Residues 5-146 (DQKPVIIHTD…ADQLARDGLT (142 aa)) form the RNase H type-1 domain. 4 residues coordinate Mg(2+): Asp-14, Glu-52, Asp-74, and Asp-138. The tract at residues 133–155 (ENERADQLARDGLTENRMKSRVK) is disordered.

The protein belongs to the RNase H family. Monomer. Mg(2+) is required as a cofactor.

Its subcellular location is the cytoplasm. It carries out the reaction Endonucleolytic cleavage to 5'-phosphomonoester.. Its function is as follows. Endonuclease that specifically degrades the RNA of RNA-DNA hybrids. The polypeptide is Ribonuclease H (Rhodopseudomonas palustris (strain ATCC BAA-98 / CGA009)).